Consider the following 597-residue polypeptide: Elongation factor 4 (597 aa).

The region spanning 2–184 (QHIRNFSIIA…TIVARVPAPQ (183 aa)) is the tr-type G domain. Residues 14–19 (DHGKST) and 131–134 (NKMD) each bind GTP.

The protein belongs to the TRAFAC class translation factor GTPase superfamily. Classic translation factor GTPase family. LepA subfamily.

The protein localises to the cell inner membrane. The enzyme catalyses GTP + H2O = GDP + phosphate + H(+). Its function is as follows. Required for accurate and efficient protein synthesis under certain stress conditions. May act as a fidelity factor of the translation reaction, by catalyzing a one-codon backward translocation of tRNAs on improperly translocated ribosomes. Back-translocation proceeds from a post-translocation (POST) complex to a pre-translocation (PRE) complex, thus giving elongation factor G a second chance to translocate the tRNAs correctly. Binds to ribosomes in a GTP-dependent manner. The protein is Elongation factor 4 of Bordetella petrii (strain ATCC BAA-461 / DSM 12804 / CCUG 43448).